Reading from the N-terminus, the 488-residue chain is Inositol 1,3,4-trisphosphate 5/6-kinase 4 (488 aa).

Residues K208 and K224 each contribute to the 1D-myo-inositol 1,3,4-trisphosphate site. In terms of domain architecture, ATP-grasp spans 246–488 (NACAIVDPIR…RFDQHVQEKH (243 aa)). ATP-binding residues include R263 and K315. 1D-myo-inositol 1,3,4-trisphosphate contacts are provided by H326 and K360. ATP-binding positions include 349 to 360 (QEYVDHSSRIFK), S375, and S398. Residues D439, D453, and N455 each contribute to the Mg(2+) site. Residues N455 and S459 each coordinate 1D-myo-inositol 1,3,4-trisphosphate.

This sequence belongs to the ITPK1 family. As to quaternary structure, monomer. Requires Mg(2+) as cofactor. As to expression, expressed in roots, leaf vasculature, cauline leaves, flower buds and siliques.

It carries out the reaction 1D-myo-inositol 1,3,4-trisphosphate + ATP = 1D-myo-inositol 1,3,4,5-tetrakisphosphate + ADP + H(+). It catalyses the reaction 1D-myo-inositol 1,3,4-trisphosphate + ATP = 1D-myo-inositol 1,3,4,6-tetrakisphosphate + ADP + H(+). Functionally, kinase that can phosphorylate the inositol polyphosphate Ins(1,3,4)P3 to form InsP4. Also phosphorylates a racemic mixture of Ins(1,4,6)P3 and Ins(3,4,6)P3 to form InsP4. Does not display inositol 3,4,5,6-tetrakisphosphate 1-kinase activity, but possesses inositol 1,4,5,6-tetrakisphosphate and inositol 1,3,4,5-tetrakisphosphate isomerase activity. Ins(1,3,4,6)P4 is an essential molecule in the hexakisphosphate (InsP6) pathway. This Arabidopsis thaliana (Mouse-ear cress) protein is Inositol 1,3,4-trisphosphate 5/6-kinase 4 (ITPK4).